We begin with the raw amino-acid sequence, 179 residues long: Large ribosomal subunit protein uL10 (179 aa).

The protein belongs to the universal ribosomal protein uL10 family. Part of the ribosomal stalk of the 50S ribosomal subunit. The N-terminus interacts with L11 and the large rRNA to form the base of the stalk. The C-terminus forms an elongated spine to which L12 dimers bind in a sequential fashion forming a multimeric L10(L12)X complex.

Functionally, forms part of the ribosomal stalk, playing a central role in the interaction of the ribosome with GTP-bound translation factors. This Kosmotoga olearia (strain ATCC BAA-1733 / DSM 21960 / TBF 19.5.1) protein is Large ribosomal subunit protein uL10.